Consider the following 1077-residue polypeptide: Error-prone DNA polymerase (1077 aa).

This sequence belongs to the DNA polymerase type-C family. DnaE2 subfamily.

It is found in the cytoplasm. The catalysed reaction is DNA(n) + a 2'-deoxyribonucleoside 5'-triphosphate = DNA(n+1) + diphosphate. DNA polymerase involved in damage-induced mutagenesis and translesion synthesis (TLS). It is not the major replicative DNA polymerase. This Brucella abortus biovar 1 (strain 9-941) protein is Error-prone DNA polymerase.